A 661-amino-acid polypeptide reads, in one-letter code: Coagulation factor XIII B chain (661 aa).

An N-terminal signal peptide occupies residues 1-20; the sequence is MRLKNLTFIIILIISGELYA. 10 consecutive Sushi domains span residues 24–88, 89–148, 151–210, 211–269, 272–329, 334–391, 394–452, 453–516, 522–580, and 581–647; these read PCGF…PRCF, KKCT…TCRK, ETCL…KCTK, LKCS…VCEG, NRCP…KCIE, VACE…ECVE, ENCK…VCLE, PCTV…PLCT, GMCT…LCLE, and PCTL…PRCI. 20 cysteine pairs are disulfide-bonded: Cys-25–Cys-76, Cys-59–Cys-87, Cys-91–Cys-135, Cys-118–Cys-146, Cys-153–Cys-197, Cys-180–Cys-208, Cys-213–Cys-255, Cys-241–Cys-267, Cys-274–Cys-316, Cys-302–Cys-327, Cys-336–Cys-378, Cys-364–Cys-389, Cys-396–Cys-439, Cys-425–Cys-450, Cys-454–Cys-505, Cys-486–Cys-515, Cys-524–Cys-567, Cys-553–Cys-578, Cys-582–Cys-636, and Cys-616–Cys-646. Asn-162 carries an N-linked (GlcNAc...) asparagine glycan. Asn-545 carries an N-linked (GlcNAc...) asparagine glycan. Positions 617–619 match the Cell attachment site motif; that stretch reads RGD.

Tetramer of two A chains (F13A1) and two B (F13B) chains.

It is found in the secreted. In terms of biological role, the B chain of factor XIII is not catalytically active, but is thought to stabilize the A subunits and regulate the rate of transglutaminase formation by thrombin. The protein is Coagulation factor XIII B chain (F13B) of Homo sapiens (Human).